The following is a 375-amino-acid chain: Neutral protease 2 homolog MGYG_00813 (375 aa).

Positions 1–19 (MQVIVALAALSSLAAPALG) are cleaved as a signal peptide. Positions 20–190 (FSIPRGVPVS…SGPLTRIGKR (171 aa)) are excised as a propeptide. Cystine bridges form between C198–C268 and C275–C293. H318 lines the Zn(2+) pocket. Residue E319 is part of the active site. Residues H322 and D333 each contribute to the Zn(2+) site.

Belongs to the peptidase M35 family. It depends on Zn(2+) as a cofactor.

It is found in the secreted. The enzyme catalyses Preferential cleavage of bonds with hydrophobic residues in P1'. Also 3-Asn-|-Gln-4 and 8-Gly-|-Ser-9 bonds in insulin B chain.. Secreted metalloproteinase that allows assimilation of proteinaceous substrates. Shows high activities on basic nuclear substrates such as histone and protamine. May be involved in virulence. In Arthroderma gypseum (strain ATCC MYA-4604 / CBS 118893) (Microsporum gypseum), this protein is Neutral protease 2 homolog MGYG_00813.